We begin with the raw amino-acid sequence, 144 residues long: Transcriptional regulator SlyA (144 aa).

The HTH marR-type domain maps to 2 to 135 (ESPLGSDLAR…LNKIISKLEK (134 aa)). The H-T-H motif DNA-binding region spans 49-72 (QIQLAKAIGIEQPSLVRTLDQLEE).

This sequence belongs to the SlyA family. In terms of assembly, homodimer.

Its function is as follows. Transcription regulator that can specifically activate or repress expression of target genes. The polypeptide is Transcriptional regulator SlyA (Blochmanniella pennsylvanica (strain BPEN)).